The primary structure comprises 651 residues: MTLFRSSLRLRLPVTLLSPPPIHKHSRLFSASHRLFTAAEMPVDTSQRLAKLRELMKERHVDVYLIPSEDSHQSEYIAPCDARRAFISGFTGSAGCAIVSMSKAALSTDGRYFNQAAKQLDENWLLLKRGMENVPTWQEWTAEQAEGGKVVGVDPSLITAAEARKLSDTIKNTGGSLVGVPDNLVDLVWGGDRPARPREKVMVHPIEFAGQSFEEKITDLRKELTKKKRAGMVISMLDEIAWLYNLRGADIPFNPVFFAYAIVTHSTAELFVDEAKLTQAVKEHLGDKVALRPYESIFESLKLLSQAAASNGDEGHQKFLLSDKASWSLNLALGGEEKVEEVRSPIADAKAVKNAVELEGTRACHIRDGAALTEYFAWLENELINKKTVLNEVDASDKLAQIRSKHKDFVGLSFDTISSTGPNAAIIHYRAERGNCPNIDPNAVYLCDSGAQYLDGTTDTTRTLHFGKPTEMEKKAYTLVLKGLISIDTAVFPKGTTGYAIDAFARQHLWRNGLDYLHGTGHGVGSYLNVHEGPMGIGTRVQYAETPITAGNVLSDEPGYYEDGNFGIRIENIVVAKEVKTPHKFGDKPWIGFEHVTMTPLCQNLMDTSLLTAEEKKWVNDYHTEVWEKTKGFFNNDELTRNWLKRETQPI.

Residues Asp-448, Asp-459, Glu-557, and Glu-571 each coordinate Mn(2+).

Belongs to the peptidase M24B family. The cofactor is Mn(2+).

The catalysed reaction is Release of any N-terminal amino acid, including proline, that is linked to proline, even from a dipeptide or tripeptide.. Functionally, catalyzes the removal of a penultimate prolyl residue from the N-termini of peptides. The sequence is that of Probable Xaa-Pro aminopeptidase P (AMPP) from Coccidioides posadasii (strain C735) (Valley fever fungus).